A 260-amino-acid polypeptide reads, in one-letter code: Late transcription factor 1 (260 aa).

This sequence belongs to the chordopoxvirinae VLTF-1 family. As to quaternary structure, interacts with the late transcription factors VLTF-2 and VLTF-3. Interacts with the late transcription elongation factor VLTF-4. Interacts with itself.

Associates with RNA polymerase to initiate transcription from late gene promoters. The protein is Late transcription factor 1 (OPG093) of Vaccinia virus (strain Ankara) (VACV).